Here is a 276-residue protein sequence, read N- to C-terminus: MALKHFNPTTPSTRGTVLIDRSELFKGKPVKQLTEGKNKSGGRNNHGRTTVRFRGGGHKQSYRYVDFKRRKFDVAATVERLEYDPNRTAFIALIKYEDGELAYILAPQRVKVGDRVISGAHTDVKPGNAMPLGAMPVGTIVHNIELKQGAGGKLARSAGTYAQLVGKDAGYAQVKLQSGELRLVRGECMATVGAVSNPDNMNQHMGKAGRSRWLGRRPHNRGVVMNPVDHPHGGGEGRTSGGRHPVTPWGVPTKGYKTRVNKKTDSLIIRRRKSGK.

The segment at 224–254 (VMNPVDHPHGGGEGRTSGGRHPVTPWGVPTK) is disordered.

This sequence belongs to the universal ribosomal protein uL2 family. As to quaternary structure, part of the 50S ribosomal subunit. Forms a bridge to the 30S subunit in the 70S ribosome.

In terms of biological role, one of the primary rRNA binding proteins. Required for association of the 30S and 50S subunits to form the 70S ribosome, for tRNA binding and peptide bond formation. It has been suggested to have peptidyltransferase activity; this is somewhat controversial. Makes several contacts with the 16S rRNA in the 70S ribosome. The protein is Large ribosomal subunit protein uL2 of Gluconobacter oxydans (strain 621H) (Gluconobacter suboxydans).